The primary structure comprises 505 residues: MNLRPEEISSIIKEQIKRYENKLEVKDVGTVIQVGDGIARIHGLEKCMAGELLEFPNAVYGMAQNLEEDNVGCVLLGSDATIREGDIVKRTGRIVEVPVGEALLGRVVNALGQPIDGKGPINTDAYREVERVAPGIISRKSVHEPLQTGIKAIDSMIPIGRGQRELIIGDRQTGKTALAIDTIINQKNTDVICIYVAIGQKKSTVAQIKDSLEKAGAMEYTIIVSSTADELAPLQYLAPYAGCAMGEEFMEKGKHVLIIYDDLSKHAVAYRAMSLLLRRPPGREAYPGDVFYLHSRLLERAAKLSDERGGGSLTALPIIETQAGDVSAYIPTNVISITDGQIFLETELFNAGIRPAVNPGISVSRVGGNAQIKAMKKVAGTLRLELAQYRELAAFAQFGSDLDKETQERLSQGERILEILKQPQYDPMPVEKQIMMIYATTKKYLTDIAVEDIRDFESGFLRFMDNEHPEVGKDIVATGSISEETEAKLKEAIESFKKQFKAERE.

ATP is bound at residue 169–176; that stretch reads GDRQTGKT.

Belongs to the ATPase alpha/beta chains family. As to quaternary structure, F-type ATPases have 2 components, CF(1) - the catalytic core - and CF(0) - the membrane proton channel. CF(1) has five subunits: alpha(3), beta(3), gamma(1), delta(1), epsilon(1). CF(0) has three main subunits: a(1), b(2) and c(9-12). The alpha and beta chains form an alternating ring which encloses part of the gamma chain. CF(1) is attached to CF(0) by a central stalk formed by the gamma and epsilon chains, while a peripheral stalk is formed by the delta and b chains.

Its subcellular location is the cell membrane. The catalysed reaction is ATP + H2O + 4 H(+)(in) = ADP + phosphate + 5 H(+)(out). In terms of biological role, produces ATP from ADP in the presence of a proton gradient across the membrane. The alpha chain is a regulatory subunit. The chain is ATP synthase subunit alpha from Alkaliphilus oremlandii (strain OhILAs) (Clostridium oremlandii (strain OhILAs)).